A 369-amino-acid chain; its full sequence is Glycolate oxidase 5 (369 aa).

The FMN hydroxy acid dehydrogenase domain maps to 1-360 (MGEITNVTEY…TRNHVITEAD (360 aa)). Tyr-25 is a binding site for glyoxylate. FMN contacts are provided by residues 78–80 (PSA), Ser-107, 128–130 (QLY), and Thr-156. Tyr-130 contacts glyoxylate. Arg-165 contacts glyoxylate. Residues Lys-231 and Ser-253 each contribute to the FMN site. The glyoxylate site is built by His-255 and Arg-258. His-255 acts as the Proton acceptor in catalysis. Residues 286 to 290 (DGGVR) and 309 to 310 (GR) contribute to the FMN site. Positions 367-369 (SRL) match the Microbody targeting signal motif.

Belongs to the FMN-dependent alpha-hydroxy acid dehydrogenase family. Homotetramer. FMN serves as cofactor.

It is found in the peroxisome. It catalyses the reaction glycolate + O2 = glyoxylate + H2O2. It participates in photosynthesis; photorespiration; glycine from 2-phosphoglycolate: step 2/3. In terms of biological role, catalyzes the oxidation of glycolate to glyoxylate, with a reduction of O2 to H2O2. Is a key enzyme in photorespiration in green plants. The polypeptide is Glycolate oxidase 5 (GLO5) (Oryza sativa subsp. japonica (Rice)).